The following is a 258-amino-acid chain: 6-carboxyhexanoate--CoA ligase (258 aa).

It belongs to the BioW family. As to quaternary structure, homodimer. Mg(2+) is required as a cofactor.

It catalyses the reaction heptanedioate + ATP + CoA = 6-carboxyhexanoyl-CoA + AMP + diphosphate. Its pathway is metabolic intermediate metabolism; pimeloyl-CoA biosynthesis; pimeloyl-CoA from pimelate: step 1/1. In terms of biological role, catalyzes the transformation of pimelate into pimeloyl-CoA with concomitant hydrolysis of ATP to AMP. This Bacillus spizizenii (strain ATCC 23059 / NRRL B-14472 / W23) (Bacillus subtilis subsp. spizizenii) protein is 6-carboxyhexanoate--CoA ligase.